We begin with the raw amino-acid sequence, 240 residues long: Uridylate kinase (240 aa).

13-16 (KLSG) is a binding site for ATP. The interval 21 to 26 (GDDGFG) is involved in allosteric activation by GTP. Glycine 55 contributes to the UMP binding site. The ATP site is built by glycine 56 and arginine 60. UMP contacts are provided by residues aspartate 75 and 136-143 (IGNPYFST). Asparagine 164, tyrosine 170, and aspartate 173 together coordinate ATP.

Belongs to the UMP kinase family. Homohexamer.

Its subcellular location is the cytoplasm. The catalysed reaction is UMP + ATP = UDP + ADP. Its pathway is pyrimidine metabolism; CTP biosynthesis via de novo pathway; UDP from UMP (UMPK route): step 1/1. Its activity is regulated as follows. Allosterically activated by GTP. Inhibited by UTP. Functionally, catalyzes the reversible phosphorylation of UMP to UDP. This Staphylococcus saprophyticus subsp. saprophyticus (strain ATCC 15305 / DSM 20229 / NCIMB 8711 / NCTC 7292 / S-41) protein is Uridylate kinase.